A 499-amino-acid chain; its full sequence is Gamma-aminobutyric acid receptor subunit beta (499 aa).

A signal peptide spans 1-23 (MWGIIVPFFSASLMCSLVAVVRC). At 24–251 (QQDTDHFANV…IFQLQRNIGY (228 aa)) the chain is on the extracellular side. N32, N98, N106, and N152 each carry an N-linked (GlcNAc...) asparagine glycan. C167 and C181 are disulfide-bonded. The next 3 helical transmembrane spans lie at 252 to 273 (FIFQTYLPSILIVMLSWVSFWI), 278 to 299 (TSARVALGITTVLTMTTISNGV), and 311 to 333 (AIDIYLVMCFVFVFAALLEYAAV). At 334 to 475 (NYTYWGARAK…RVQDVNTIDK (142 aa)) the chain is on the cytoplasmic side. A helical transmembrane segment spans residues 476–499 (YARLMFPLLFIIFNTSYWSVYLLT).

This sequence belongs to the ligand-gated ion channel (TC 1.A.9) family. Gamma-aminobutyric acid receptor (TC 1.A.9.5) subfamily. As to quaternary structure, generally pentameric. There are five types of GABA(A) receptor chains: alpha, beta, gamma, delta, and rho.

Its subcellular location is the postsynaptic cell membrane. It is found in the cell membrane. Its function is as follows. GABA, an inhibitory neurotransmitter, mediates neuronal inhibition by binding to the GABA/benzodiazepine receptor and opening an integral chloride channel. This Lymnaea stagnalis (Great pond snail) protein is Gamma-aminobutyric acid receptor subunit beta.